A 298-amino-acid chain; its full sequence is MDINKARKAKFDELNSGKNLEISRAIEALGDLECACEFSDTINIKFQNLSAEKKEEIYALAKSLKPWRKGPFKIDDIFIDTEWQSFIKFNLLAPHLNLDGKSVADVGCNNGYYMFRMLNFAPKKITGFDPSVHTALQFKFINHFAKTNIAYEMLGVEHLPFFESKFDTIFCLGVIYHRSDPIKMLKELKSALNPGGEVFLDTMYIDMRGEFALSPKNTYSKIPNIYFVPTIDALQGWCERAKFKDFEILATKQTDTSEQRKTPWIDGQSLQNFLDPNDNTKTIEGYPAPKRVYVKIKI.

Residues Lys69, Trp83, Lys88, Gly107, 129-131 (DPS), 156-157 (VE), Tyr176, and Arg291 contribute to the carboxy-S-adenosyl-L-methionine site.

Belongs to the class I-like SAM-binding methyltransferase superfamily. CmoB family. In terms of assembly, homotetramer.

It catalyses the reaction carboxy-S-adenosyl-L-methionine + 5-hydroxyuridine(34) in tRNA = 5-carboxymethoxyuridine(34) in tRNA + S-adenosyl-L-homocysteine + H(+). Functionally, catalyzes carboxymethyl transfer from carboxy-S-adenosyl-L-methionine (Cx-SAM) to 5-hydroxyuridine (ho5U) to form 5-carboxymethoxyuridine (cmo5U) at position 34 in tRNAs. This chain is tRNA U34 carboxymethyltransferase, found in Campylobacter curvus (strain 525.92).